Here is a 667-residue protein sequence, read N- to C-terminus: Coiled-coil domain-containing protein 154 (667 aa).

4 coiled-coil regions span residues 76 to 182, 215 to 302, 384 to 410, and 457 to 521; these read VVEL…QEAG, RRVD…GQHE, LLRE…SGHL, and LRGV…KEDN.

Its subcellular location is the early endosome. The sequence is that of Coiled-coil domain-containing protein 154 from Homo sapiens (Human).